Reading from the N-terminus, the 149-residue chain is Small ribosomal subunit protein bS6 (149 aa).

Positions 93–149 are disordered; sequence VGKHEEGPSAMMQKRDRDDRPRRDGDRPDRGGFGDRGPRPDRGDRDDRPRRPREDRA. A compositionally biased stretch (basic and acidic residues) spans 94–149; that stretch reads GKHEEGPSAMMQKRDRDDRPRRDGDRPDRGGFGDRGPRPDRGDRDDRPRRPREDRA.

The protein belongs to the bacterial ribosomal protein bS6 family.

In terms of biological role, binds together with bS18 to 16S ribosomal RNA. The protein is Small ribosomal subunit protein bS6 of Rhizobium meliloti (strain 1021) (Ensifer meliloti).